Here is a 294-residue protein sequence, read N- to C-terminus: Aquaporin-B (294 aa).

The disordered stretch occupies residues 1–31 (MSLKRSDDYQDLEEGIAMEDGGNIKDEEEKP). The Cytoplasmic segment spans residues 1–42 (MSLKRSDDYQDLEEGIAMEDGGNIKDEEEKPLDPIEEQNKKR). A compositionally biased stretch (basic and acidic residues) spans 22-31 (GNIKDEEEKP). A helical transmembrane segment spans residues 43–63 (WVLIRAVLGELLCTFLFVYVL). Residues 64 to 79 (CATSANFIRLGSPPNP) are Extracellular-facing. An O-linked (GalNAc...) serine glycan is attached at S75. Residues 80 to 100 (VVGGLSTGFAAVALIYSFADV) traverse the membrane as a helical segment. Residues 101–123 (SGAHFNPAVTFATCVTRKTSITK) lie on the Cytoplasmic side of the membrane. The short motif at 106–108 (NPA) is the NPA 1 element. The chain crosses the membrane as a helical span at residues 124–144 (GLMYVGAQLVGSVLASLILLA). At 145–172 (TFPGNFPGDKNAASAVAIAPSTDANIGN) the chain is on the extracellular side. Residues 173-193 (AFLTELVLTFILVYVIFAVAF) form a helical membrane-spanning segment. Residues 194 to 224 (DTVDNSVKTKVVGKSSSNNLTIYTTSGQTKA) are Cytoplasmic-facing. Residues 208–219 (SSSNNLTIYTTS) form a required for water permeability region. The helical transmembrane segment at 225 to 245 (GFAPIAIGFTLGFLCFLGGSV) threads the bilayer. Topologically, residues 246–268 (SGGAFNPARVFGTALVGNNWTRH) are extracellular. The NPA 2 signature appears at 251-253 (NPA). The chain crosses the membrane as a helical span at residues 269-289 (WMYWIADFLGAGLAGFAQKFF). The Cytoplasmic portion of the chain corresponds to 290–294 (SSTHK).

The protein belongs to the MIP/aquaporin (TC 1.A.8) family. Post-translationally, glycosylated and non-glycosylated forms exist throughout all developmental stages.

The protein resides in the cell membrane. It is found in the cytoplasmic vesicle. Putatively gated water-specific channel, requiring a cysteine residue within the channel. Impermeable to water, glycerol and urea when expressed in Xenopus oocytes. Not regulated by pH; channels remain impermeable to water at pH 7.4 and 5.2. This chain is Aquaporin-B, found in Dictyostelium discoideum (Social amoeba).